The chain runs to 206 residues: Cytidylate kinase (206 aa).

7–15 (GPAASGKGT) contributes to the ATP binding site.

Belongs to the cytidylate kinase family. Type 1 subfamily.

It localises to the cytoplasm. The catalysed reaction is CMP + ATP = CDP + ADP. It carries out the reaction dCMP + ATP = dCDP + ADP. This Azorhizobium caulinodans (strain ATCC 43989 / DSM 5975 / JCM 20966 / LMG 6465 / NBRC 14845 / NCIMB 13405 / ORS 571) protein is Cytidylate kinase.